The following is a 430-amino-acid chain: Resistance to inhibitors of cholinesterase protein 19 (430 aa).

The 205-residue stretch at 56–260 (ASDNELDTCL…TSRAFETLAE (205 aa)) folds into the AH domain. Residues 279–342 (GTKPERERKS…SPLIEDVDDE (64 aa)) are disordered. A compositionally biased stretch (basic and acidic residues) spans 281–294 (KPERERKSEKEESA).

In terms of assembly, interacts with the GTPase activator protein tbc-8; the interaction is direct and may be required for the activation of rab-2 and dense vesicle maturation in cholinergic motoneurons. Interacts with rund-1. Expressed in all neurons. Highly expressed in m2 pharyngeal neurons and some pharyngeal interneurons. Also expressed in the excretory canal and the gland cells located just below the nerve ring in the head.

The protein resides in the cytoplasm. It localises to the cytoplasmic vesicle membrane. May be involved in neurotransmitter secretion. In association with the GTPase activator protein tbc-8 activates rab-2 during dense core vesicle maturation in cholinergic motoneurons. This chain is Resistance to inhibitors of cholinesterase protein 19, found in Caenorhabditis elegans.